The chain runs to 374 residues: MMTDNSKTRVVVGMSGGVDSSVTALLLKEQGYDVIGVFMKNWDDTDEFGVCTATEDYKDVAAVADQIGIPYYSVNFEKEYWDRVFEYFLAEYRSGRTPNPDVMCNKEIKFKAFLDYAMTLGADYVATGHYAQIKRDENGVVHMLRGLDKGKDQTYFLSQLSQEQLQKTMFPLGHLQKSEVRAIAEQAGLATAKKKDSTGICFIGEKNFKTFLSHYLPAQKGRMMTVDGRDMGEHAGLMYYTIGQRGGLGIGGQQGGDNKPWFVVGKDLSQNILYVGQGFYHESLMSTSLDASVIQFTREVPEEFTLECTAKFRYRQPDSKVTVHVKKDKAKVVFAEPQRAITPGQAVVFYDGHECLGGGIIDMAYKDGEPCQYI.

ATP contacts are provided by residues 13-20 (GMSGGVDS) and methionine 39. An interaction with target base in tRNA region spans residues 99–101 (NPD). The Nucleophile role is filled by cysteine 104. Residues cysteine 104 and cysteine 201 are joined by a disulfide bond. Glycine 128 contacts ATP. The interaction with tRNA stretch occupies residues 151 to 153 (KDQ). Cysteine 201 acts as the Cysteine persulfide intermediate in catalysis. Residues 313-314 (RY) form an interaction with tRNA region.

It belongs to the MnmA/TRMU family.

The protein localises to the cytoplasm. It carries out the reaction S-sulfanyl-L-cysteinyl-[protein] + uridine(34) in tRNA + AH2 + ATP = 2-thiouridine(34) in tRNA + L-cysteinyl-[protein] + A + AMP + diphosphate + H(+). Catalyzes the 2-thiolation of uridine at the wobble position (U34) of tRNA, leading to the formation of s(2)U34. The sequence is that of tRNA-specific 2-thiouridylase MnmA from Streptococcus equi subsp. zooepidemicus (strain MGCS10565).